The chain runs to 414 residues: L-cysteine:1D-myo-inositol 2-amino-2-deoxy-alpha-D-glucopyranoside ligase (414 aa).

A Zn(2+)-binding site is contributed by Cys-44. L-cysteinyl-5'-AMP contacts are provided by residues 44-47 (CGIT), Thr-59, and 82-84 (NIT). Positions 46 to 56 (ITPYDSTHLGH) match the 'HIGH' region motif. The short motif at 188 to 193 (ERGGDP) is the 'ERGGDP' region element. Residue Trp-228 participates in L-cysteinyl-5'-AMP binding. Cys-232 is a binding site for Zn(2+). 250–252 (GSD) provides a ligand contact to L-cysteinyl-5'-AMP. Position 257 (His-257) interacts with Zn(2+). Ile-284 is an L-cysteinyl-5'-AMP binding site. The 'KMSKS' region signature appears at 290–294 (KMSKS).

The protein belongs to the class-I aminoacyl-tRNA synthetase family. MshC subfamily. In terms of assembly, monomer. Zn(2+) is required as a cofactor.

It catalyses the reaction 1D-myo-inositol 2-amino-2-deoxy-alpha-D-glucopyranoside + L-cysteine + ATP = 1D-myo-inositol 2-(L-cysteinylamino)-2-deoxy-alpha-D-glucopyranoside + AMP + diphosphate + H(+). Its function is as follows. Catalyzes the ATP-dependent condensation of GlcN-Ins and L-cysteine to form L-Cys-GlcN-Ins. This Corynebacterium diphtheriae (strain ATCC 700971 / NCTC 13129 / Biotype gravis) protein is L-cysteine:1D-myo-inositol 2-amino-2-deoxy-alpha-D-glucopyranoside ligase (mshC).